Here is a 154-residue protein sequence, read N- to C-terminus: Large ribosomal subunit protein uL13 (154 aa).

Belongs to the universal ribosomal protein uL13 family. In terms of assembly, part of the 50S ribosomal subunit.

This protein is one of the early assembly proteins of the 50S ribosomal subunit, although it is not seen to bind rRNA by itself. It is important during the early stages of 50S assembly. This is Large ribosomal subunit protein uL13 from Brucella canis (strain ATCC 23365 / NCTC 10854 / RM-666).